Reading from the N-terminus, the 450-residue chain is Probable ECA polymerase (450 aa).

The next 11 membrane-spanning stretches (helical) occupy residues 6–26 (FSGLFVVWLLCTLFIATLTWF), 37–57 (VFFSLLFLLTFFFGFPLTSVL), 63–83 (VGVAPPEILLQALLSAGCFYA), 118–138 (VILMGIALVSVGIFFMHNGFL), 155–175 (GVALKRFFYFFIPAMLVVYFL), 181–201 (AWLFFLVSTVAFGLLTYMIVG), 207–227 (IIIAFAIFLFIGIIRGWISLW), 228–248 (MLAAAGVLGIVGMFWLALKRY), 341–361 (LVVMGGALFIPLGAIVVGLII), 378–398 (YKAAILHSFCFGAIFNMIVLA), and 410–430 (VFFIVVFGACLMIAKLLYWLF).

This sequence belongs to the WzyE family. In terms of assembly, probably part of a complex composed of WzxE, WzyE and WzzE.

Its subcellular location is the cell inner membrane. It functions in the pathway bacterial outer membrane biogenesis; enterobacterial common antigen biosynthesis. Probably involved in the polymerization of enterobacterial common antigen (ECA) trisaccharide repeat units. The protein is Probable ECA polymerase of Escherichia coli O139:H28 (strain E24377A / ETEC).